The chain runs to 212 residues: Uridine kinase (212 aa).

Position 13–20 (13–20 (GGSGSGKT)) interacts with ATP.

This sequence belongs to the uridine kinase family.

It localises to the cytoplasm. It carries out the reaction uridine + ATP = UMP + ADP + H(+). The enzyme catalyses cytidine + ATP = CMP + ADP + H(+). Its pathway is pyrimidine metabolism; CTP biosynthesis via salvage pathway; CTP from cytidine: step 1/3. The protein operates within pyrimidine metabolism; UMP biosynthesis via salvage pathway; UMP from uridine: step 1/1. In Bacillus cereus (strain ATCC 10987 / NRS 248), this protein is Uridine kinase.